Reading from the N-terminus, the 257-residue chain is 3-dehydroquinate dehydratase (257 aa).

3-dehydroquinate is bound by residues 50–52 (EWR) and arginine 86. Histidine 147 acts as the Proton donor/acceptor in catalysis. Lysine 174 acts as the Schiff-base intermediate with substrate in catalysis. 3-dehydroquinate-binding residues include arginine 216, serine 235, and glutamine 239.

This sequence belongs to the type-I 3-dehydroquinase family. In terms of assembly, homodimer.

The catalysed reaction is 3-dehydroquinate = 3-dehydroshikimate + H2O. It functions in the pathway metabolic intermediate biosynthesis; chorismate biosynthesis; chorismate from D-erythrose 4-phosphate and phosphoenolpyruvate: step 3/7. Involved in the third step of the chorismate pathway, which leads to the biosynthesis of aromatic amino acids. Catalyzes the cis-dehydration of 3-dehydroquinate (DHQ) and introduces the first double bond of the aromatic ring to yield 3-dehydroshikimate. This Geobacillus thermodenitrificans (strain NG80-2) protein is 3-dehydroquinate dehydratase.